The sequence spans 474 residues: Protein CyaE (474 aa).

Positions 1–31 (MAAVQVRRRGRALALALWAGFALSVGGGVRA) are cleaved as a signal peptide.

This sequence belongs to the outer membrane factor (OMF) (TC 1.B.17) family.

It is found in the cell outer membrane. In terms of biological role, cyaE is necessary for transport of calmodulin-sensitive adenylate cyclase-hemolysin (cyclolysin). In Bordetella pertussis (strain Tohama I / ATCC BAA-589 / NCTC 13251), this protein is Protein CyaE (cyaE).